The primary structure comprises 369 residues: S-adenosylmethionine:tRNA ribosyltransferase-isomerase (369 aa).

It belongs to the QueA family. Monomer.

The protein resides in the cytoplasm. The catalysed reaction is 7-aminomethyl-7-carbaguanosine(34) in tRNA + S-adenosyl-L-methionine = epoxyqueuosine(34) in tRNA + adenine + L-methionine + 2 H(+). It participates in tRNA modification; tRNA-queuosine biosynthesis. In terms of biological role, transfers and isomerizes the ribose moiety from AdoMet to the 7-aminomethyl group of 7-deazaguanine (preQ1-tRNA) to give epoxyqueuosine (oQ-tRNA). The sequence is that of S-adenosylmethionine:tRNA ribosyltransferase-isomerase from Synechococcus sp. (strain CC9311).